An 803-amino-acid chain; its full sequence is Translation initiation factor IF-2 (803 aa).

Disordered regions lie at residues 95–125 (PVVE…EKAE) and 138–178 (EVKE…EREE). The segment covering 111-121 (VPLTSDTTNLN) has biased composition (polar residues). Residues 138–155 (EVKEEAKKTPSEKKETPK) are compositionally biased toward basic and acidic residues. Basic residues predominate over residues 156–167 (KGPRKETRRSRK). A compositionally biased stretch (basic and acidic residues) spans 168-178 (PDKEDKWEREE). Residues 302–471 (PRAPVVTIMG…LLQAEVLELK (170 aa)) enclose the tr-type G domain. A G1 region spans residues 311–318 (GHVDHGKT). Position 311–318 (311–318 (GHVDHGKT)) interacts with GTP. Residues 336-340 (GITQH) are G2. The G3 stretch occupies residues 357–360 (DTPG). Residues 357 to 361 (DTPGH) and 411 to 414 (NKID) each bind GTP. The G4 stretch occupies residues 411 to 414 (NKID). Residues 447-449 (SAK) are G5.

The protein belongs to the TRAFAC class translation factor GTPase superfamily. Classic translation factor GTPase family. IF-2 subfamily.

It is found in the cytoplasm. In terms of biological role, one of the essential components for the initiation of protein synthesis. Protects formylmethionyl-tRNA from spontaneous hydrolysis and promotes its binding to the 30S ribosomal subunits. Also involved in the hydrolysis of GTP during the formation of the 70S ribosomal complex. This is Translation initiation factor IF-2 from Coxiella burnetii (strain CbuK_Q154) (Coxiella burnetii (strain Q154)).